The primary structure comprises 526 residues: Peptide chain release factor 3 (526 aa).

In terms of domain architecture, tr-type G spans 8–277 (GKRRTFAIIS…GLTEWAPAPQ (270 aa)). GTP contacts are provided by residues 17 to 24 (SHPDAGKT), 85 to 89 (DTPGH), and 139 to 142 (NKMD).

This sequence belongs to the TRAFAC class translation factor GTPase superfamily. Classic translation factor GTPase family. PrfC subfamily.

The protein resides in the cytoplasm. Increases the formation of ribosomal termination complexes and stimulates activities of RF-1 and RF-2. It binds guanine nucleotides and has strong preference for UGA stop codons. It may interact directly with the ribosome. The stimulation of RF-1 and RF-2 is significantly reduced by GTP and GDP, but not by GMP. The polypeptide is Peptide chain release factor 3 (Aliivibrio salmonicida (strain LFI1238) (Vibrio salmonicida (strain LFI1238))).